The following is a 1320-amino-acid chain: Phosphoribosylformylglycinamidine synthase (1320 aa).

ATP-binding positions include 310–321 (GAATGSGGEIRD) and Ala-686. Mg(2+) is bound by residues Asp-687, Glu-726, Asn-730, and Asp-894. Residue Ser-896 coordinates ATP. Residues 1067–1320 (VAILREQGVN…MFRNARAFIG (254 aa)) form the Glutamine amidotransferase type-1 domain. The active-site Nucleophile is Cys-1160. Active-site residues include His-1285 and Glu-1287.

In the N-terminal section; belongs to the FGAMS family. As to quaternary structure, monomer.

It localises to the cytoplasm. It catalyses the reaction N(2)-formyl-N(1)-(5-phospho-beta-D-ribosyl)glycinamide + L-glutamine + ATP + H2O = 2-formamido-N(1)-(5-O-phospho-beta-D-ribosyl)acetamidine + L-glutamate + ADP + phosphate + H(+). The protein operates within purine metabolism; IMP biosynthesis via de novo pathway; 5-amino-1-(5-phospho-D-ribosyl)imidazole from N(2)-formyl-N(1)-(5-phospho-D-ribosyl)glycinamide: step 1/2. Its function is as follows. Phosphoribosylformylglycinamidine synthase involved in the purines biosynthetic pathway. Catalyzes the ATP-dependent conversion of formylglycinamide ribonucleotide (FGAR) and glutamine to yield formylglycinamidine ribonucleotide (FGAM) and glutamate. The protein is Phosphoribosylformylglycinamidine synthase of Colwellia psychrerythraea (strain 34H / ATCC BAA-681) (Vibrio psychroerythus).